A 323-amino-acid polypeptide reads, in one-letter code: Acetylglutamate kinase (323 aa).

Residues 90 to 91, Arg-112, and Asn-218 contribute to the substrate site; that span reads GG.

Belongs to the acetylglutamate kinase family. ArgB subfamily.

Its subcellular location is the cytoplasm. It carries out the reaction N-acetyl-L-glutamate + ATP = N-acetyl-L-glutamyl 5-phosphate + ADP. It functions in the pathway amino-acid biosynthesis; L-arginine biosynthesis; N(2)-acetyl-L-ornithine from L-glutamate: step 2/4. Catalyzes the ATP-dependent phosphorylation of N-acetyl-L-glutamate. This chain is Acetylglutamate kinase, found in Ehrlichia canis (strain Jake).